The chain runs to 304 residues: Probable 5-dehydro-4-deoxyglucarate dehydratase (304 aa).

This sequence belongs to the DapA family.

The enzyme catalyses 5-dehydro-4-deoxy-D-glucarate + H(+) = 2,5-dioxopentanoate + CO2 + H2O. It participates in carbohydrate acid metabolism; D-glucarate degradation; 2,5-dioxopentanoate from D-glucarate: step 2/2. The sequence is that of Probable 5-dehydro-4-deoxyglucarate dehydratase from Rhodococcus opacus (strain B4).